The following is a 203-amino-acid chain: MPVNLNHTLLLCLLVAASLLSGCSSTLGEQYQTLNVSQSKQAKAWELQGKIAVKSPTDKFSTNLYWFHLGEENQLSLTTMLGTTVLTLNSKPGLARLEVDGKEYVDSNPQDLLEAVSGWSIPLDNLPLWITGQVGVNDEISAYHDDGLIKSLISPAPEHNWQVSFLSWQQQSGASVPKQIKIERAGVQVRIQINRWQALKTQQ.

The first 22 residues, 1 to 22, serve as a signal peptide directing secretion; it reads MPVNLNHTLLLCLLVAASLLSG. Cys23 carries the N-palmitoyl cysteine lipid modification. Cys23 carries S-diacylglycerol cysteine lipidation.

Belongs to the LolB family. Monomer.

The protein localises to the cell outer membrane. Functionally, plays a critical role in the incorporation of lipoproteins in the outer membrane after they are released by the LolA protein. The sequence is that of Outer-membrane lipoprotein LolB from Shewanella denitrificans (strain OS217 / ATCC BAA-1090 / DSM 15013).